The chain runs to 161 residues: Ragulator complex protein LAMTOR1 (161 aa).

Positions 1–43 (MGCCYSSENEDSDQDREERKLLLDPSSPPTKALNGAEPNYHSL) are disordered. Gly2 is lipidated: N-myristoyl glycine. Residues Cys3 and Cys4 are each lipidated (S-palmitoyl cysteine). A Glycyl lysine isopeptide (Lys-Gly) (interchain with G-Cter in ubiquitin) cross-link involves residue Lys20. Ser27 is modified (phosphoserine). Lys31 is covalently cross-linked (Glycyl lysine isopeptide (Lys-Gly) (interchain with G-Cter in ubiquitin)). Residues Ser42 and Ser56 each carry the phosphoserine modification. Lys60 is covalently cross-linked (Glycyl lysine isopeptide (Lys-Gly) (interchain with G-Cter in ubiquitin)). A Phosphoserine modification is found at Ser98. Residues Lys103 and Lys104 each participate in a glycyl lysine isopeptide (Lys-Gly) (interchain with G-Cter in ubiquitin) cross-link. Residues 121–161 (SEPIPFSDLQQVSRIAAYAYSALSQIRVDAKEELVVQFGIP) are interaction with LAMTOR2 and LAMTOR3. Phosphoserine is present on Ser141.

The protein belongs to the LAMTOR1 family. In terms of assembly, part of the Ragulator complex composed of LAMTOR1, LAMTOR2, LAMTOR3, LAMTOR4 and LAMTOR5. LAMTOR4 and LAMTOR5 form a heterodimer that interacts, through LAMTOR1, with a LAMTOR2, LAMTOR3 heterodimer. Interacts with LAMTOR2 and LAMTOR3; the interaction is direct. The Ragulator complex interacts with both the mTORC1 complex and heterodimers constituted of the Rag GTPases RagA/RRAGA, RagB/RRAGB, RagC/RRAGC and RagD/RRAGD; regulated by amino acid availability. The Ragulator complex interacts with SLC38A9; the probable amino acid sensor. Component of the lysosomal folliculin complex (LFC), composed of FLCN, FNIP1 (or FNIP2), RagA/RRAGA or RagB/RRAGB GDP-bound, RagC/RRAGC or RagD/RRAGD GTP-bound, and Ragulator. Associates with the lysosomal V-ATPase complex; interaction promotes the guanine nucleotide exchange factor (GEF) of the Ragulator complex. Interacts with MMP14. Interacts with CDKN1B; prevents the interaction of CDKN1B with RHOA leaving RHOA in a form accessible to activation by ARHGEF2. Interacts with PIP4P1. In terms of processing, N-terminal myristoylation and palmitoylation mediates its recruitment to lysosome membranes, thereby promoting localization of the Ragulator complex to lysosomes. N-myristoylation by NMT1 is required for palmitoylation at Cys-3 and Cys-4. May be palmitoylated by ZDHHC3. Post-translationally, ubiquitinated at Lys-60, Lys-103 and Lys-104 by UBE3A, promoting its degradation by the proteasome. Ubiquitination at Lys-20 impairs the association with the lysosomal V-ATPase complex. Deubiquitination at Lys-20 by USP32 promotes the association with the lysosomal V-ATPase complex and subsequent activation of the mTORC1 complex.

The protein resides in the lysosome membrane. The protein localises to the late endosome membrane. In terms of biological role, key component of the Ragulator complex, a multiprotein complex involved in amino acid sensing and activation of mTORC1, a signaling complex promoting cell growth in response to growth factors, energy levels, and amino acids. Activated by amino acids through a mechanism involving the lysosomal V-ATPase, the Ragulator plays a dual role for the small GTPases Rag (RagA/RRAGA, RagB/RRAGB, RagC/RRAGC and/or RagD/RRAGD): it (1) acts as a guanine nucleotide exchange factor (GEF), activating the small GTPases Rag and (2) mediates recruitment of Rag GTPases to the lysosome membrane. Activated Ragulator and Rag GTPases function as a scaffold recruiting mTORC1 to lysosomes where it is in turn activated. LAMTOR1 is directly responsible for anchoring the Ragulator complex to the lysosomal membrane. LAMTOR1 wraps around the other subunits of the Ragulator complex to hold them in place and interacts with the Rag GTPases, thereby playing a key role in the recruitment of the mTORC1 complex to lysosomes. Also involved in the control of embryonic stem cells differentiation via non-canonical RagC/RRAGC and RagD/RRAGD activation: together with FLCN, it is necessary to recruit and activate RagC/RRAGC and RagD/RRAGD at the lysosomes, and to induce exit of embryonic stem cells from pluripotency via non-canonical, mTOR-independent TFE3 inactivation. Also required for late endosomes/lysosomes biogenesis it may regulate both the recycling of receptors through endosomes and the MAPK signaling pathway through recruitment of some of its components to late endosomes. May be involved in cholesterol homeostasis regulating LDL uptake and cholesterol release from late endosomes/lysosomes. May also play a role in RHOA activation. This is Ragulator complex protein LAMTOR1 from Homo sapiens (Human).